The sequence spans 117 residues: Large ribosomal subunit protein bL20c (117 aa).

Belongs to the bacterial ribosomal protein bL20 family.

The protein localises to the plastid. Its subcellular location is the chloroplast. Its function is as follows. Binds directly to 23S ribosomal RNA and is necessary for the in vitro assembly process of the 50S ribosomal subunit. It is not involved in the protein synthesizing functions of that subunit. This is Large ribosomal subunit protein bL20c from Carica papaya (Papaya).